Here is a 387-residue protein sequence, read N- to C-terminus: Patatin group A-2 (387 aa).

The N-terminal stretch at 1–23 (MATTKSFLILIVMILATTSSTFA) is a signal peptide. In terms of domain architecture, PNPLA spans 32–230 (LSIDGGGIKG…TVADPALLSV (199 aa)). The GXGXXG signature appears at 36–41 (GGGIKG). The short motif at 75 to 79 (GTSTG) is the GXSXG element. The Nucleophile role is filled by serine 77. An N-linked (GlcNAc...) asparagine glycan is attached at asparagine 115. Residue aspartate 216 is the Proton acceptor of the active site. Positions 216 to 218 (DGA) match the DGA/G motif. A coiled-coil region spans residues 361 to 385 (ETYEEALKRFAKLLSDRKKLRANKA).

Belongs to the patatin family. Tuber and stolon.

It is found in the vacuole. Probable lipolytic acyl hydrolase (LAH), an activity which is thought to be involved in the response of tubers to pathogens. The sequence is that of Patatin group A-2 from Solanum tuberosum (Potato).